Here is a 435-residue protein sequence, read N- to C-terminus: Glutamyl-tRNA reductase (435 aa).

Residues 49–52, Ser-109, 114–116, and Gln-120 contribute to the substrate site; these read TCNR and ETQ. Residue Cys-50 is the Nucleophile of the active site. 189-194 contributes to the NADP(+) binding site; it reads GAGEMS.

This sequence belongs to the glutamyl-tRNA reductase family. Homodimer.

The catalysed reaction is (S)-4-amino-5-oxopentanoate + tRNA(Glu) + NADP(+) = L-glutamyl-tRNA(Glu) + NADPH + H(+). Its pathway is porphyrin-containing compound metabolism; protoporphyrin-IX biosynthesis; 5-aminolevulinate from L-glutamyl-tRNA(Glu): step 1/2. Its function is as follows. Catalyzes the NADPH-dependent reduction of glutamyl-tRNA(Glu) to glutamate 1-semialdehyde (GSA). In Listeria monocytogenes serotype 4a (strain HCC23), this protein is Glutamyl-tRNA reductase.